Consider the following 790-residue polypeptide: Lon protease (790 aa).

The region spanning 13–209 (LPLFPIRNTV…RLTDHVAKEI (197 aa)) is the Lon N-terminal domain. 362 to 369 (GPPGVGKT) contributes to the ATP binding site. In terms of domain architecture, Lon proteolytic spans 598–779 (DNQVGITIGL…DQVLDIALAT (182 aa)). Active-site residues include S685 and K728.

It belongs to the peptidase S16 family. As to quaternary structure, homohexamer. Organized in a ring with a central cavity.

It localises to the cytoplasm. The catalysed reaction is Hydrolysis of proteins in presence of ATP.. Its function is as follows. ATP-dependent serine protease that mediates the selective degradation of mutant and abnormal proteins as well as certain short-lived regulatory proteins. Required for cellular homeostasis and for survival from DNA damage and developmental changes induced by stress. Degrades polypeptides processively to yield small peptide fragments that are 5 to 10 amino acids long. Binds to DNA in a double-stranded, site-specific manner. In Orientia tsutsugamushi (strain Ikeda) (Rickettsia tsutsugamushi), this protein is Lon protease.